Reading from the N-terminus, the 526-residue chain is Na(+)/H(+) antiporter NhaB (526 aa).

Helical transmembrane passes span 14-34, 35-55, 99-119, 122-142, 146-166, 206-226, 239-259, 307-327, 328-348, 357-377, 397-417, 451-471, and 479-499; these read FLGYAPDWYKLTIFGFLLINP, LLFYFVSPFWAGWLLVVEFIF, MLLVFMVAGIYFMKQLLLFVF, LLLRIHSKPLLSLAFCMAAAF, FLDALTVIAVIISVAIGFYGI, LMMHAGVGTALGGVMTMVGEP, FVDFFLRMSPVTVPVFICGIL, AVIGVWLIIALAFHLAEVGLI, GLSVIIMATTFCGVTEEHAIG, FTALLTVFFAIVAVIIDQQLF, YLFNGLLSSISDNVFVGSVYI, ATPNGQAAFLFLLTSSLAPLI, and VIMALPYTIVMTLVGLLCVEF.

Belongs to the NhaB Na(+)/H(+) (TC 2.A.34) antiporter family.

The protein localises to the cell inner membrane. The enzyme catalyses 2 Na(+)(in) + 3 H(+)(out) = 2 Na(+)(out) + 3 H(+)(in). In terms of biological role, na(+)/H(+) antiporter that extrudes sodium in exchange for external protons. This is Na(+)/H(+) antiporter NhaB from Pectobacterium atrosepticum (strain SCRI 1043 / ATCC BAA-672) (Erwinia carotovora subsp. atroseptica).